We begin with the raw amino-acid sequence, 172 residues long: ATP synthase subunit b (172 aa).

Residues 13-33 (GINGGDILFQLVMFLILLALL) traverse the membrane as a helical segment.

It belongs to the ATPase B chain family. As to quaternary structure, F-type ATPases have 2 components, F(1) - the catalytic core - and F(0) - the membrane proton channel. F(1) has five subunits: alpha(3), beta(3), gamma(1), delta(1), epsilon(1). F(0) has three main subunits: a(1), b(2) and c(10-14). The alpha and beta chains form an alternating ring which encloses part of the gamma chain. F(1) is attached to F(0) by a central stalk formed by the gamma and epsilon chains, while a peripheral stalk is formed by the delta and b chains.

The protein localises to the cell membrane. In terms of biological role, f(1)F(0) ATP synthase produces ATP from ADP in the presence of a proton or sodium gradient. F-type ATPases consist of two structural domains, F(1) containing the extramembraneous catalytic core and F(0) containing the membrane proton channel, linked together by a central stalk and a peripheral stalk. During catalysis, ATP synthesis in the catalytic domain of F(1) is coupled via a rotary mechanism of the central stalk subunits to proton translocation. Its function is as follows. Component of the F(0) channel, it forms part of the peripheral stalk, linking F(1) to F(0). The polypeptide is ATP synthase subunit b (Priestia megaterium (strain ATCC 12872 / QMB1551) (Bacillus megaterium)).